Consider the following 200-residue polypeptide: Recombination protein RecR (200 aa).

Residues 60 to 75 (CVYCQALTEDDVCNIC) form a C4-type zinc finger. The region spanning 83–177 (TKLCIIESML…KISRIGFGVP (95 aa)) is the Toprim domain.

The protein belongs to the RecR family.

May play a role in DNA repair. It seems to be involved in an RecBC-independent recombinational process of DNA repair. It may act with RecF and RecO. In Francisella tularensis subsp. mediasiatica (strain FSC147), this protein is Recombination protein RecR.